Here is a 779-residue protein sequence, read N- to C-terminus: Transcription activator of gluconeogenesis BDCG_02812 (779 aa).

Residues 1–70 (MTASTRNGSP…NAKDPLRPRR (70 aa)) are disordered. Polar residues predominate over residues 25 to 61 (KSMTTTPANPPETKSQTNGKGSGTAQSSQKPASTSAN). Residues 77 to 105 (CFACQRAHLTCGDERPCQRCIKRGLQDAC) constitute a DNA-binding region (zn(2)-C6 fungal-type). Disordered regions lie at residues 135-163 (QANTTRNIPNQRGNASNSNSNKVSRQSVS), 202-239 (SVFHAQSPSSTQNFDLSSNPQTQNLSSAMSQTASSVSG), 285-344 (GAGD…ANPR), 401-421 (TNLMHPTNTPQQSRISTPGLK), 559-590 (GSSLSSASSVRGSSTFTPRNNNTHNSIDPHTG), and 655-732 (FHGK…QTWG). Over residues 202–226 (SVFHAQSPSSTQNFDLSSNPQTQNL) the composition is skewed to polar residues. Residues 227–238 (SSAMSQTASSVS) are compositionally biased toward low complexity. Composition is skewed to polar residues over residues 291-322 (PSDSATQRGSIGRSSGTFTAQNFGDSANNQSP), 333-344 (WNPTGQGQANPR), and 401-416 (TNLMHPTNTPQQSRIS). Over residues 560–572 (SSLSSASSVRGSS) the composition is skewed to low complexity. Polar residues predominate over residues 573–586 (TFTPRNNNTHNSID). Residues 672 to 719 (TGTTTSGDVATTTATGTSTSNGANANTNGNNTNPNDPSSAASSSASSA) are compositionally biased toward low complexity. Residues 720 to 729 (LQGPQQSPRQ) are compositionally biased toward polar residues.

This sequence belongs to the ERT1/acuK family.

The protein resides in the nucleus. In terms of biological role, transcription factor which regulates nonfermentable carbon utilization. Activator of gluconeogenetic genes. The chain is Transcription activator of gluconeogenesis BDCG_02812 from Ajellomyces dermatitidis (strain ER-3 / ATCC MYA-2586) (Blastomyces dermatitidis).